Reading from the N-terminus, the 269-residue chain is Monofunctional glycosyltransferase (269 aa).

Residues 46-66 (ILLTILIIIALFIGIMYFLST) form a helical membrane-spanning segment.

This sequence belongs to the glycosyltransferase 51 family.

The protein resides in the cell membrane. It carries out the reaction [GlcNAc-(1-&gt;4)-Mur2Ac(oyl-L-Ala-gamma-D-Glu-L-Lys-D-Ala-D-Ala)](n)-di-trans,octa-cis-undecaprenyl diphosphate + beta-D-GlcNAc-(1-&gt;4)-Mur2Ac(oyl-L-Ala-gamma-D-Glu-L-Lys-D-Ala-D-Ala)-di-trans,octa-cis-undecaprenyl diphosphate = [GlcNAc-(1-&gt;4)-Mur2Ac(oyl-L-Ala-gamma-D-Glu-L-Lys-D-Ala-D-Ala)](n+1)-di-trans,octa-cis-undecaprenyl diphosphate + di-trans,octa-cis-undecaprenyl diphosphate + H(+). Its pathway is cell wall biogenesis; peptidoglycan biosynthesis. Peptidoglycan polymerase that catalyzes glycan chain elongation using lipid-linked disaccharide-pentapeptide as the substrate. This is Monofunctional glycosyltransferase from Staphylococcus aureus (strain Newman).